Consider the following 271-residue polypeptide: Structure-specific endonuclease subunit slx1 (271 aa).

Positions 5-87 (NFYCCYLLKS…QNLGISRYTK (83 aa)) constitute a GIY-YIG domain. An SLX1-type zinc finger spans residues 180 to 231 (CNLCYECIESDELRANCPFTDCNSINHLTCLASSFLTEECQVLPIEGMCTKC).

The protein belongs to the SLX1 family. In terms of assembly, forms a heterodimer with slx4. Mg(2+) is required as a cofactor. Mn(2+) serves as cofactor.

It is found in the nucleus. The protein resides in the nucleolus. In terms of biological role, catalytic subunit of the slx1-slx4 structure-specific endonuclease that resolves DNA secondary structures generated during DNA repair and recombination. Has endonuclease activity towards branched DNA substrates, introducing single-strand cuts in duplex DNA close to junctions with ss-DNA. Has a preference for stem-loop (SL) and splayed arm Y structures. Introduces a single-strand cut in duplex DNA on the 3' side of a double-strand/single-strand junction with respect to the single-strand moving 3' to 5' away from the junction. Plays a critical role in maintaining the integrity of the ribosomal DNA (rDNA) loci, where it has a role in re-starting stalled replication forks. The complex initiates homologous recombination (HR) events, used to maintain rDNA copy number, in the rDNA repeats that are processed by a mechanism that requires rad22, but not rhp51. It is also required for suppression of methyl methanesulfonate (MMS) and UV-C irradiation hypersensitivity of the structural maintenance of chromosome (SMC) protein mutant, smc6-74, by overexpression of brc1. Has Holliday junction resolvase activity in vitro. In Schizosaccharomyces pombe (strain 972 / ATCC 24843) (Fission yeast), this protein is Structure-specific endonuclease subunit slx1.